Here is a 225-residue protein sequence, read N- to C-terminus: Uridylate kinase (225 aa).

7 to 11 is an ATP binding site; it reads KISGS. Gly44 is a binding site for UMP. ATP-binding residues include Gly45 and Arg49. UMP is bound by residues Asp66 and 114 to 120; that span reads FQPGQST. The ATP site is built by Tyr147 and Glu150.

The protein belongs to the UMP kinase family. As to quaternary structure, homohexamer.

The protein resides in the cytoplasm. It catalyses the reaction UMP + ATP = UDP + ADP. It functions in the pathway pyrimidine metabolism; CTP biosynthesis via de novo pathway; UDP from UMP (UMPK route): step 1/1. Its activity is regulated as follows. Inhibited by UTP. Functionally, catalyzes the reversible phosphorylation of UMP to UDP. The sequence is that of Uridylate kinase from Aeropyrum pernix (strain ATCC 700893 / DSM 11879 / JCM 9820 / NBRC 100138 / K1).